Consider the following 544-residue polypeptide: Chaperonin GroEL 1 (544 aa).

ATP is bound by residues Thr29 to Pro32, Asp86 to Thr90, Gly413, and Asp495. A disordered region spans residues Pro525–Tyr544. The span at Lys528–Gly538 shows a compositional bias: polar residues.

It belongs to the chaperonin (HSP60) family. In terms of assembly, forms a cylinder of 14 subunits composed of two heptameric rings stacked back-to-back. Interacts with the co-chaperonin GroES.

The protein resides in the cytoplasm. The catalysed reaction is ATP + H2O + a folded polypeptide = ADP + phosphate + an unfolded polypeptide.. Together with its co-chaperonin GroES, plays an essential role in assisting protein folding. The GroEL-GroES system forms a nano-cage that allows encapsulation of the non-native substrate proteins and provides a physical environment optimized to promote and accelerate protein folding. This Synechococcus sp. (strain JA-2-3B'a(2-13)) (Cyanobacteria bacterium Yellowstone B-Prime) protein is Chaperonin GroEL 1.